The following is a 301-amino-acid chain: 33 kDa chaperonin (301 aa).

2 disulfides stabilise this stretch: cysteine 239–cysteine 241 and cysteine 272–cysteine 275.

This sequence belongs to the HSP33 family. Under oxidizing conditions two disulfide bonds are formed involving the reactive cysteines. Under reducing conditions zinc is bound to the reactive cysteines and the protein is inactive.

The protein resides in the cytoplasm. Its function is as follows. Redox regulated molecular chaperone. Protects both thermally unfolding and oxidatively damaged proteins from irreversible aggregation. Plays an important role in the bacterial defense system toward oxidative stress. In Trichormus variabilis (strain ATCC 29413 / PCC 7937) (Anabaena variabilis), this protein is 33 kDa chaperonin.